The following is a 184-amino-acid chain: MIQHDNNKMYGTTILSIRKDKSVVVIGDGQVSLGHTVIKSGAKKVRRLSGDSVIAGFAGATADAFTLFERLESKLDKHPGQLMRACVELAKDWRMDKYLRKLEAMMIVADKSISLVITGTGDVLEPEDGVAAIGSGGNFALSAARALIDIKGISIEEIAKKAMKIAGDICVYTNHNVVIEKIEE.

Threonine 12 is a catalytic residue. Na(+) is bound by residues glycine 167, cysteine 170, and threonine 173.

This sequence belongs to the peptidase T1B family. HslV subfamily. In terms of assembly, a double ring-shaped homohexamer of HslV is capped on each side by a ring-shaped HslU homohexamer. The assembly of the HslU/HslV complex is dependent on binding of ATP.

The protein localises to the cytoplasm. It carries out the reaction ATP-dependent cleavage of peptide bonds with broad specificity.. With respect to regulation, allosterically activated by HslU binding. Protease subunit of a proteasome-like degradation complex believed to be a general protein degrading machinery. This Wolbachia sp. subsp. Drosophila simulans (strain wRi) protein is ATP-dependent protease subunit HslV.